We begin with the raw amino-acid sequence, 317 residues long: MSSTRKFKKVEKPLSQTRHYSLCIPTTLVSDCRNLSQITHKVYQVAKFASLFNVSEVVILEDNSQVDATKKKISTAKLILALLQYFVTPPYLRNTVFNEKFRPYLTAASKLPRLSTLPFTRYQKQDHGRYREGLTIKMQKPTLARKKIGKVFKQTKYINIGKSKALALQSQLVPINARVTIDTITRKIVSPQEAYGDFTGLDSQYGYYTRIASSFTDLFMKGPLKEGYTQSVYVPLTTRDTSIPELSSLPTAETNPHILLVFSTWDTLARAFKLDQDQFVDCQGPQEFFDAQLPCPVSNSDVADAIPMTLTTLSTVF.

Ser190 bears the Phosphoserine mark.

This sequence belongs to the class IV-like SAM-binding methyltransferase superfamily.

The protein localises to the nucleus. In Saccharomyces cerevisiae (strain ATCC 204508 / S288c) (Baker's yeast), this protein is Putative methyltransferase YMR310C.